The sequence spans 413 residues: Eukaryotic initiation factor 4A-14 (413 aa).

A Q motif motif is present at residues 40–68 (DSFDAMGLQENLLRGIYAYGFEKPSAIQQ). Residues 71–241 (IVPFCKGLDV…RKFMSKPVRI (171 aa)) enclose the Helicase ATP-binding domain. 84–91 (AQSGTGKT) lines the ATP pocket. The DEAD box signature appears at 189 to 192 (DEAD). The 162-residue stretch at 252–413 (GIKQFYVNVD…ELPANVADLL (162 aa)) folds into the Helicase C-terminal domain.

The protein belongs to the DEAD box helicase family. eIF4A subfamily. EIF4F is a multi-subunit complex, the composition of which varies with external and internal environmental conditions. It is composed of at least EIF4A, EIF4E and EIF4G.

The enzyme catalyses ATP + H2O = ADP + phosphate + H(+). ATP-dependent RNA helicase which is a subunit of the eIF4F complex involved in cap recognition and is required for mRNA binding to ribosome. In the current model of translation initiation, eIF4A unwinds RNA secondary structures in the 5'-UTR of mRNAs which is necessary to allow efficient binding of the small ribosomal subunit, and subsequent scanning for the initiator codon. This is Eukaryotic initiation factor 4A-14 from Nicotiana tabacum (Common tobacco).